The sequence spans 101 residues: B3 domain-containing protein At1g08985 (101 aa).

The segment at residues 7-101 (IVKTLSETDC…WQNTKFIFSM (95 aa)) is a DNA-binding region (TF-B3).

The protein localises to the nucleus. This chain is B3 domain-containing protein At1g08985, found in Arabidopsis thaliana (Mouse-ear cress).